A 349-amino-acid polypeptide reads, in one-letter code: Thiamine thiazole synthase, chloroplastic (349 aa).

The N-terminal 45 residues, 1–45 (MAAIASTLSLSSTKPQRLFDSSFHGSAISAAPISIGLKPRSFSVR), are a transit peptide targeting the chloroplast. Residues A94, 114 to 115 (EQ), G122, and A187 contribute to the substrate site. The residue at position 216 (C216) is a 2,3-didehydroalanine (Cys). Residues D218, H233, M285, and 295–297 (RMG) contribute to the substrate site.

This sequence belongs to the THI4 family. Homooctamer. Interacts with RBCX1 and RBCX1. Interacts with CPK33. It depends on Fe cation as a cofactor. Post-translationally, during the catalytic reaction, a sulfide is transferred from Cys-216 to a reaction intermediate, generating a dehydroalanine residue. Not phosphorylated in vitro by CPK33. In terms of tissue distribution, expressed at high levels in chloroplast-containing parenchymatic cells of leaves, inflorescence shoots and flowers, and at lower levels in the vascular system. In young plants, detected in roots and shoots including cotyledons, leaves and hypocotyls. Also observed in apical meristematic regions, siliques and embryos. Low expression in roots, limited to the vascular tissue. Broadly expressed in roots, cotyledons, leaves, hypocotyls, inflorescences, siliques, and strongly in guard cells.

The protein localises to the plastid. Its subcellular location is the chloroplast. The protein resides in the mitochondrion. It is found in the cell membrane. It catalyses the reaction [ADP-thiazole synthase]-L-cysteine + glycine + NAD(+) = [ADP-thiazole synthase]-dehydroalanine + ADP-5-ethyl-4-methylthiazole-2-carboxylate + nicotinamide + 3 H2O + 2 H(+). Its function is as follows. Involved in biosynthesis of the thiamine precursor thiazole. Catalyzes the conversion of NAD and glycine to adenosine diphosphate 5-(2-hydroxyethyl)-4-methylthiazole-2-carboxylic acid (ADT), an adenylated thiazole intermediate. The reaction includes an iron-dependent sulfide transfer from a conserved cysteine residue of the protein to a thiazole intermediate. The enzyme can only undergo a single turnover, which suggests it is a suicide enzyme. May have additional roles in adaptation to various stress conditions and in DNA damage tolerance. Acts as a positive regulator for the abscisic acid-induced activation of slow type anion channels during stomatal closure by repressing CPK33 kinase activity. This is Thiamine thiazole synthase, chloroplastic from Arabidopsis thaliana (Mouse-ear cress).